Here is a 428-residue protein sequence, read N- to C-terminus: Trigger factor (428 aa).

The PPIase FKBP-type domain maps to 163–248 (GDTAVIDFEG…INEVKAKELP (86 aa)).

The protein belongs to the FKBP-type PPIase family. Tig subfamily.

It is found in the cytoplasm. It catalyses the reaction [protein]-peptidylproline (omega=180) = [protein]-peptidylproline (omega=0). Involved in protein export. Acts as a chaperone by maintaining the newly synthesized protein in an open conformation. Functions as a peptidyl-prolyl cis-trans isomerase. This Oceanobacillus iheyensis (strain DSM 14371 / CIP 107618 / JCM 11309 / KCTC 3954 / HTE831) protein is Trigger factor.